A 458-amino-acid chain; its full sequence is Divalent metal cation transporter MntH (458 aa).

11 consecutive transmembrane segments (helical) span residues 38-58 (GFWKTLAAYTGPGILVAVGYM), 76-96 (SLLSVILISSLIAMLLQAMAA), 119-139 (GGFLWVITELAIMATDIAEII), 151-171 (MPLIVGIIITTADVLILLLLM), 180-200 (AVVATLVLVILLVFAYEVILA), 223-243 (MLYLSLGIVGATVMPHDLFLG), 275-295 (LTMAFIVNSLLLILGAALFFG), 315-335 (IVGAIASPMLSMLFAVALLAS), 370-390 (LMSVTPVLIFAIYYHGNEAKI), 393-413 (LLTFSQVFLSIALPFAVIPLV), and 437-457 (FISGVLIILNLYLIAQTLGFV).

The protein belongs to the NRAMP family.

Its subcellular location is the cell membrane. In terms of biological role, h(+)-stimulated, divalent metal cation uptake system. In Lacticaseibacillus casei (strain BL23) (Lactobacillus casei), this protein is Divalent metal cation transporter MntH.